The primary structure comprises 338 residues: Nicotinate-nucleotide--dimethylbenzimidazole phosphoribosyltransferase (338 aa).

Catalysis depends on Glu-305, which acts as the Proton acceptor.

This sequence belongs to the CobT family.

The enzyme catalyses 5,6-dimethylbenzimidazole + nicotinate beta-D-ribonucleotide = alpha-ribazole 5'-phosphate + nicotinate + H(+). It participates in nucleoside biosynthesis; alpha-ribazole biosynthesis; alpha-ribazole from 5,6-dimethylbenzimidazole: step 1/2. Functionally, catalyzes the synthesis of alpha-ribazole-5'-phosphate from nicotinate mononucleotide (NAMN) and 5,6-dimethylbenzimidazole (DMB). The chain is Nicotinate-nucleotide--dimethylbenzimidazole phosphoribosyltransferase from Rhizobium etli (strain ATCC 51251 / DSM 11541 / JCM 21823 / NBRC 15573 / CFN 42).